Reading from the N-terminus, the 467-residue chain is Light-independent protochlorophyllide reductase subunit N (467 aa).

The [4Fe-4S] cluster site is built by Cys23, Cys48, and Cys108.

It belongs to the BchN/ChlN family. Protochlorophyllide reductase is composed of three subunits; ChlL, ChlN and ChlB. Forms a heterotetramer of two ChlB and two ChlN subunits. [4Fe-4S] cluster is required as a cofactor.

The catalysed reaction is chlorophyllide a + oxidized 2[4Fe-4S]-[ferredoxin] + 2 ADP + 2 phosphate = protochlorophyllide a + reduced 2[4Fe-4S]-[ferredoxin] + 2 ATP + 2 H2O. It participates in porphyrin-containing compound metabolism; chlorophyll biosynthesis (light-independent). Component of the dark-operative protochlorophyllide reductase (DPOR) that uses Mg-ATP and reduced ferredoxin to reduce ring D of protochlorophyllide (Pchlide) to form chlorophyllide a (Chlide). This reaction is light-independent. The NB-protein (ChlN-ChlB) is the catalytic component of the complex. In Trichormus variabilis (strain ATCC 29413 / PCC 7937) (Anabaena variabilis), this protein is Light-independent protochlorophyllide reductase subunit N.